The chain runs to 217 residues: MYGESLVKLMLALDVMDEKKAILIAKETSEYVDSIKIGYPLVLATGLNIIDKIKESTNKEVICDFKVADIPSTNEKIAELTLNHADGIICQGFVGSDSVSAILNVARAKNKKVIVVTEMSHPGATEYLQNVAEDMAKMADRLKVDGIVAPSTRPERLKEIKSIAKDAFVISPGVGAQGGNLSDVLNVLNENDYVIIGRAIYENENPKNAAKKYKIQM.

Substrate contacts are provided by residues Asp14, Lys36, Asp64 to Thr73, Ser120, Pro172 to Ser182, Gly197, and Arg198. Lys66 functions as the Proton donor in the catalytic mechanism.

Belongs to the OMP decarboxylase family. Type 1 subfamily. Homodimer.

It catalyses the reaction orotidine 5'-phosphate + H(+) = UMP + CO2. Its pathway is pyrimidine metabolism; UMP biosynthesis via de novo pathway; UMP from orotate: step 2/2. Functionally, catalyzes the decarboxylation of orotidine 5'-monophosphate (OMP) to uridine 5'-monophosphate (UMP). The protein is Orotidine 5'-phosphate decarboxylase of Methanococcus maripaludis (strain DSM 14266 / JCM 13030 / NBRC 101832 / S2 / LL).